We begin with the raw amino-acid sequence, 405 residues long: Polyketide biosynthesis cytochrome P450 PksS (405 aa).

The helical transmembrane segment at 231-251 (LYSMLFLLVVAGLETTVNLLG) threads the bilayer. Residue Cys-352 coordinates heme.

Belongs to the cytochrome P450 family.

It is found in the cell membrane. Its pathway is antibiotic biosynthesis; bacillaene biosynthesis. Its function is as follows. Involved in the metabolism of the antibiotic polyketide bacillaene which is involved in secondary metabolism. The substrate is dihydrobacillaene. The chain is Polyketide biosynthesis cytochrome P450 PksS (pksS) from Bacillus subtilis (strain 168).